A 159-amino-acid chain; its full sequence is Ribosome maturation factor RimP (159 aa).

This sequence belongs to the RimP family.

Its subcellular location is the cytoplasm. Its function is as follows. Required for maturation of 30S ribosomal subunits. The chain is Ribosome maturation factor RimP from Geotalea uraniireducens (strain Rf4) (Geobacter uraniireducens).